We begin with the raw amino-acid sequence, 625 residues long: Glutamine--fructose-6-phosphate aminotransferase [isomerizing] (625 aa).

The Nucleophile; for GATase activity role is filled by Cys2. One can recognise a Glutamine amidotransferase type-2 domain in the interval 2–229 (CGIVGFVGRT…NDQIVTITAD (228 aa)). 2 SIS domains span residues 296–436 (IDES…LRGN) and 470–615 (LAQD…VDQP). Lys620 functions as the For Fru-6P isomerization activity in the catalytic mechanism.

In terms of assembly, homodimer.

Its subcellular location is the cytoplasm. It catalyses the reaction D-fructose 6-phosphate + L-glutamine = D-glucosamine 6-phosphate + L-glutamate. In terms of biological role, catalyzes the first step in hexosamine metabolism, converting fructose-6P into glucosamine-6P using glutamine as a nitrogen source. The sequence is that of Glutamine--fructose-6-phosphate aminotransferase [isomerizing] from Corynebacterium diphtheriae (strain ATCC 700971 / NCTC 13129 / Biotype gravis).